A 356-amino-acid chain; its full sequence is Butyrate kinase (356 aa).

This sequence belongs to the acetokinase family.

It is found in the cytoplasm. The enzyme catalyses butanoate + ATP = butanoyl phosphate + ADP. It functions in the pathway lipid metabolism; butanoate metabolism. In terms of biological role, catalyzes the conversion of butyryl-CoA through butyryl phosphate to butyrate. The chain is Butyrate kinase from Clostridium tetani (strain Massachusetts / E88).